Reading from the N-terminus, the 315-residue chain is MPELERAPKLDQALAEVAAEMAERTDRGDVATYIPQLGKVDPRKFGIAAVTNDGRVLVAGDADQAFSIQSISKVFTLTLALGNVGDALWQRVGREPSGNPFNSIVQLEHENGIPRNPFINAGAIVISDILLAGHQPREAIGEILRFIQFLADDDTIIIDREVAASERATGYRNFALANYMKSFGNLHHAPELALGVYFHHCAIAMSCRQLAMAGRFLANGGKNPATGHSVVSAERARRIGAMMLTCGHYDGSGDFAFRVGIPGKSGVGGGILGIVPGVASLAVWSPGLNANGNSKLGSIALEKLARMMNWSIFAP.

Substrate-binding residues include serine 70, asparagine 120, glutamate 166, asparagine 173, tyrosine 197, tyrosine 249, and valine 267.

The protein belongs to the glutaminase family. As to quaternary structure, homotetramer.

It catalyses the reaction L-glutamine + H2O = L-glutamate + NH4(+). The protein is Glutaminase of Mesorhizobium japonicum (strain LMG 29417 / CECT 9101 / MAFF 303099) (Mesorhizobium loti (strain MAFF 303099)).